The chain runs to 196 residues: Imidazoleglycerol-phosphate dehydratase (196 aa).

This sequence belongs to the imidazoleglycerol-phosphate dehydratase family.

It localises to the cytoplasm. The enzyme catalyses D-erythro-1-(imidazol-4-yl)glycerol 3-phosphate = 3-(imidazol-4-yl)-2-oxopropyl phosphate + H2O. It participates in amino-acid biosynthesis; L-histidine biosynthesis; L-histidine from 5-phospho-alpha-D-ribose 1-diphosphate: step 6/9. This chain is Imidazoleglycerol-phosphate dehydratase, found in Dehalococcoides mccartyi (strain ATCC BAA-2266 / KCTC 15142 / 195) (Dehalococcoides ethenogenes (strain 195)).